The sequence spans 556 residues: MRRLVYCKVVLATSLMWVLVDVFLLLYFSECNKCDDKKERSLLPALRAVISRNQEGPGEMGKAVLIPKDDQEKMKELFKINQFNLMASDLIALNRSLPDVRLEGCKTKVYPDELPNTSVVIVFHNEAWSTLLRTVYSVINRSPHYLLSEVILVDDASERDFLKLTLENYVKTLEVPVKIIRMEERSGLIRARLRGAAASKGQVITFLDAHCECTLGWLEPLLARIKEDRKTVVCPIIDVISDDTFEYMAGSDMTYGGFNWKLNFRWYPVPQREMDRRKGDRTLPVRTPTMAGGLFSIDRNYFEEIGTYDAGMDIWGGENLEMSFRIWQCGGSLEIVTCSHVGHVFRKATPYTFPGGTGHVINKNNRRLAEVWMDEFKDFFYIISPGVVKVDYGDVSVRKTLRENLKCKPFSWYLENIYPDSQIPRRYYSLGEIRNVETNQCLDNMGRKENEKVGIFNCHGMGGNQVFSYTADKEIRTDDLCLDVSRLSGPVIMLKCHHMRGNQLWEYDAERLTLRHANSNQCLDEPSEEDKMVPTMQDCSGSRSQQWLLRNMTLGT.

At 1 to 4 (MRRL) the chain is on the cytoplasmic side. A helical; Signal-anchor for type II membrane protein transmembrane segment spans residues 5–27 (VYCKVVLATSLMWVLVDVFLLLY). Residues 28–556 (FSECNKCDDK…WLLRNMTLGT (529 aa)) lie on the Lumenal side of the membrane. Asn-94 and Asn-116 each carry an N-linked (GlcNAc...) asparagine glycan. Cystine bridges form between Cys-105-Cys-338, Cys-329-Cys-407, Cys-441-Cys-458, Cys-481-Cys-496, and Cys-522-Cys-539. The catalytic subdomain A stretch occupies residues 114–224 (LPNTSVVIVF…LGWLEPLLAR (111 aa)). Residues Asp-155 and Arg-185 each contribute to the substrate site. The Mn(2+) site is built by Asp-208 and His-210. The interval 284–346 (PVRTPTMAGG…TCSHVGHVFR (63 aa)) is catalytic subdomain B. Trp-315 provides a ligand contact to substrate. His-343 serves as a coordination point for Mn(2+). Substrate is bound by residues Arg-346 and Tyr-351. The Ricin B-type lectin domain maps to 428 to 550 (YSLGEIRNVE…GSRSQQWLLR (123 aa)). An N-linked (GlcNAc...) asparagine glycan is attached at Asn-551.

It belongs to the glycosyltransferase 2 family. GalNAc-T subfamily. Requires Mn(2+) as cofactor.

The protein localises to the golgi apparatus membrane. The catalysed reaction is L-seryl-[protein] + UDP-N-acetyl-alpha-D-galactosamine = a 3-O-[N-acetyl-alpha-D-galactosaminyl]-L-seryl-[protein] + UDP + H(+). The enzyme catalyses L-threonyl-[protein] + UDP-N-acetyl-alpha-D-galactosamine = a 3-O-[N-acetyl-alpha-D-galactosaminyl]-L-threonyl-[protein] + UDP + H(+). Its pathway is protein modification; protein glycosylation. Functionally, catalyzes the initial reaction in O-linked oligosaccharide biosynthesis, the transfer of an N-acetyl-D-galactosamine (GalNAc) residue from UDP-GalNAc to a serine or threonine residue on the protein receptor. Generates GalNAc-O-Ser/Thr structure also known as Tn antigen, which itself is immunogenic but also serves as a precursor for the synthesis of different mucin-type O-glycan core structures. Contributes to the synthesis of O-linked glycans on mucins and proteoglycans of the central nervous system. Can glycosylate both unmodified peptides and glycopeptides that already contain an O-linked GalNAc sugar. Transfers GalNAc to Thr-/Ser-rich tandem repeats GTTPSPVPTTSTTSAP of MUC5AC. Transfers GalNAc to three consecutive serine/threonine residues on SDC3 forming a triplet-Tn epitope expressed in Purkinje cells of the developing brain. May promote neurogenesis through glycosylation and stabilization of PDPN. The sequence is that of Polypeptide N-acetylgalactosaminyltransferase 13 (Galnt13) from Rattus norvegicus (Rat).